The primary structure comprises 854 residues: Probable inactive serine/threonine-protein kinase DDB_G0274821 (854 aa).

Residues 1 to 266 (MPIKESFKRI…WPKLFIHPFF (266 aa)) form the Protein kinase domain. N-linked (GlcNAc...) asparagine glycans are attached at residues Asn-32 and Asn-106. A disordered region spans residues 116–135 (NNNNNNNNNNNNNNNNNNNN). Asn-163, Asn-279, Asn-283, and Asn-290 each carry an N-linked (GlcNAc...) asparagine glycan. The segment at 289–331 (LNKSSSSSSSSSSSSSSSSSSSSSSSLSFQQQQQPNNISSPNL) is disordered. The span at 292–322 (SSSSSSSSSSSSSSSSSSSSSSSLSFQQQQQ) shows a compositional bias: low complexity. Asn-325, Asn-347, and Asn-365 each carry an N-linked (GlcNAc...) asparagine glycan. The tract at residues 384-408 (IISPNRPSSPPLSSLSSCSSSSSSS) is disordered. N-linked (GlcNAc...) asparagine glycosylation is present at Asn-414. The tract at residues 425–446 (NNNNNNNNNNNNNNNNNNNNNN) is disordered. 3 N-linked (GlcNAc...) asparagine glycosylation sites follow: Asn-520, Asn-541, and Asn-620. Residues 627 to 650 (SSPPPSSSSSSSSPSSPSSTSPSL) are disordered. The segment covering 633 to 650 (SSSSSSSPSSPSSTSPSL) has biased composition (low complexity). N-linked (GlcNAc...) asparagine glycosylation is present at Asn-757. Residues 770 to 792 (HWRVQISFLNILFILITINNNFI) form a helical membrane-spanning segment.

Belongs to the protein kinase superfamily. Ser/Thr protein kinase family.

Its subcellular location is the membrane. The polypeptide is Probable inactive serine/threonine-protein kinase DDB_G0274821 (Dictyostelium discoideum (Social amoeba)).